Consider the following 375-residue polypeptide: tRNA-specific 2-thiouridylase MnmA (375 aa).

Residues 12–19 (GMSGGVDS) and methionine 38 contribute to the ATP site. Residues 98-100 (NPD) form an interaction with target base in tRNA region. Cysteine 103 serves as the catalytic Nucleophile. A disulfide bond links cysteine 103 and cysteine 200. Glycine 127 is an ATP binding site. Residues 150–152 (KDQ) are interaction with tRNA. Catalysis depends on cysteine 200, which acts as the Cysteine persulfide intermediate. The segment at 312–313 (RY) is interaction with tRNA.

This sequence belongs to the MnmA/TRMU family.

It localises to the cytoplasm. It catalyses the reaction S-sulfanyl-L-cysteinyl-[protein] + uridine(34) in tRNA + AH2 + ATP = 2-thiouridine(34) in tRNA + L-cysteinyl-[protein] + A + AMP + diphosphate + H(+). In terms of biological role, catalyzes the 2-thiolation of uridine at the wobble position (U34) of tRNA, leading to the formation of s(2)U34. This is tRNA-specific 2-thiouridylase MnmA from Lactobacillus delbrueckii subsp. bulgaricus (strain ATCC 11842 / DSM 20081 / BCRC 10696 / JCM 1002 / NBRC 13953 / NCIMB 11778 / NCTC 12712 / WDCM 00102 / Lb 14).